The sequence spans 150 residues: Nitric oxide reductase subunit C (150 aa).

A helical; Signal-anchor membrane pass occupies residues 13-29 (VFYGGSIFFILIFGALT). C62, C65, and H66 together coordinate heme c.

Heterodimer of cytochromes b (large subunit) and c (small subunit).

The protein resides in the cell membrane. Component of the anaerobic respiratory chain that transforms nitrate to dinitrogen (denitrification). The protein is Nitric oxide reductase subunit C (norC) of Paracoccus denitrificans.